A 78-amino-acid chain; its full sequence is Mandibular organ-inhibiting hormone 1 (78 aa).

Disulfide bonds link Cys7–Cys44, Cys24–Cys40, and Cys27–Cys53.

It belongs to the arthropod CHH/MIH/GIH/VIH hormone family. As to expression, produced by the medulla terminalis X-organ in the eyestalks and transported to the sinus gland where it is stored and released.

It is found in the secreted. Its function is as follows. Represses the synthesis of methyl farnesoate, the precursor of insect juvenile hormone III in the mandibular organ. The polypeptide is Mandibular organ-inhibiting hormone 1 (Cancer pagurus (Rock crab)).